The primary structure comprises 394 residues: Guanine nucleotide-binding protein G(s) subunit alpha (394 aa).

Positions 1–23 are disordered; it reads MGCLGNSKTEDQRNEEKAQREAN. Residue glycine 2 is the site of N-palmitoyl glycine attachment. A lipid anchor (S-palmitoyl cysteine) is attached at cysteine 3. Residues 8–23 show a composition bias toward basic and acidic residues; that stretch reads KTEDQRNEEKAQREAN. The G-alpha domain maps to 39–394; sequence ATHRLLLLGA…RMHLRQYELL (356 aa). Positions 42–55 are G1 motif; that stretch reads RLLLLGAGESGKST. 47–55 serves as a coordination point for GTP; that stretch reads GAGESGKST. A Mg(2+)-binding site is contributed by serine 54. The disordered stretch occupies residues 68–90; it reads FNGEGGEEDPQAARSNSDGEKAT. Residues 196-204 form a G2 motif region; that stretch reads DLLRCRVLT. GTP contacts are provided by residues 197–204, 223–227, 292–295, and alanine 366; these read LLRCRVLT, DVGGQ, and NKQD. Residue threonine 204 coordinates Mg(2+). A G3 motif region spans residues 219–228; the sequence is FHMFDVGGQR. A G4 motif region spans residues 288–295; the sequence is ILFLNKQD. A G5 motif region spans residues 364 to 369; sequence TCAVDT.

This sequence belongs to the G-alpha family. G(s) subfamily. In terms of assembly, heterotrimeric G proteins are composed of 3 units; alpha, beta and gamma. The alpha chain contains the guanine nucleotide binding site. Interacts with CRY1; the interaction may block GPCR-mediated regulation of cAMP concentrations. Interacts with ADCY6 and stimulates its adenylyl cyclase activity. Interacts with ADCY2 and ADCY5. Stimulates the ADCY5 adenylyl cyclase activity. Interaction with SASH1.

The protein localises to the cell membrane. In terms of biological role, guanine nucleotide-binding proteins (G proteins) function as transducers in numerous signaling pathways controlled by G protein-coupled receptors (GPCRs). Signaling involves the activation of adenylyl cyclases, resulting in increased levels of the signaling molecule cAMP. GNAS functions downstream of several GPCRs, including beta-adrenergic receptors. Stimulates the Ras signaling pathway via RAPGEF2. This is Guanine nucleotide-binding protein G(s) subunit alpha (GNAS) from Cricetulus griseus (Chinese hamster).